The sequence spans 444 residues: NADH-quinone oxidoreductase subunit F (444 aa).

NAD(+) is bound at residue 61–70 (GRGGAGFSTG). Residue 176 to 223 (GAGRYICGEETALINSLEGRRANPRSKPPFPAVFGLWGKPTCVNNVET) participates in FMN binding. Residues Cys-353, Cys-356, Cys-359, and Cys-400 each contribute to the [4Fe-4S] cluster site.

This sequence belongs to the complex I 51 kDa subunit family. In terms of assembly, composed of 13 different subunits. Subunits NuoCD, E, F, and G constitute the peripheral sector of the complex. It depends on FMN as a cofactor. [4Fe-4S] cluster serves as cofactor.

The enzyme catalyses a quinone + NADH + 5 H(+)(in) = a quinol + NAD(+) + 4 H(+)(out). In terms of biological role, NDH-1 shuttles electrons from NADH, via FMN and iron-sulfur (Fe-S) centers, to quinones in the respiratory chain. Couples the redox reaction to proton translocation (for every two electrons transferred, four hydrogen ions are translocated across the cytoplasmic membrane), and thus conserves the redox energy in a proton gradient. The polypeptide is NADH-quinone oxidoreductase subunit F (nuoF) (Buchnera aphidicola subsp. Acyrthosiphon pisum (strain APS) (Acyrthosiphon pisum symbiotic bacterium)).